We begin with the raw amino-acid sequence, 615 residues long: (+)-alpha-pinene synthase TPS2, chloroplastic (615 aa).

A chloroplast-targeting transit peptide spans 1-55 (MHCMAVRHFAPSSSLSIFSSTNINNHFFGREIFTPKTSNITTKKSRSRPNCNPIQ). (2E)-geranyl diphosphate is bound by residues Arg-330, Asp-367, Asp-371, Arg-509, and Asp-512. Residues Asp-367 and Asp-371 each coordinate Mg(2+). The DDXXD motif signature appears at 367–371 (DDIYD). Mg(2+)-binding residues include Asp-512, Thr-516, and Glu-520.

It belongs to the terpene synthase family. Tpsb subfamily. Mg(2+) serves as cofactor. Requires Mn(2+) as cofactor. The cofactor is K(+). As to expression, trichome.

The protein localises to the plastid. Its subcellular location is the chloroplast. It catalyses the reaction (2E)-geranyl diphosphate = (1R,5R)-alpha-pinene + diphosphate. The catalysed reaction is (2E)-geranyl diphosphate = (1R,5R)-beta-pinene + diphosphate. It carries out the reaction (2E)-geranyl diphosphate = (4S)-limonene + diphosphate. The enzyme catalyses (2E)-geranyl diphosphate = beta-myrcene + diphosphate. The protein operates within secondary metabolite biosynthesis; terpenoid biosynthesis. It functions in the pathway terpene metabolism; (-)-alpha-pinene biosynthesis; (-)-alpha-pinene from geranyl diphosphate: step 1/1. Its function is as follows. Involved in monoterpene (C10) olefins biosynthesis, constituants of cannabinoids and terpenoids-rich resins. Catalyzes mainly the conversion of (2E)-geranyl diphosphate to (+)-alpha-pinene, and also produces minor products such as (-)-limonene, (+)-beta-pinene and beta-myrcene. The protein is (+)-alpha-pinene synthase TPS2, chloroplastic of Cannabis sativa (Hemp).